Reading from the N-terminus, the 593-residue chain is Methylenetetrahydrofolate reductase (NADH) 1 (593 aa).

E21 functions as the Proton donor/acceptor in the catalytic mechanism. Residues E21–K26 and T52–W53 each bind NAD(+). FAD-binding positions include T52 to W53, H81, R111 to D113, Y153, H157 to A160, D175, and K182. Residue D113 coordinates substrate. The substrate site is built by Q193 and Y285.

This sequence belongs to the methylenetetrahydrofolate reductase family. In terms of assembly, homodimer. The cofactor is FAD.

The enzyme catalyses (6S)-5-methyl-5,6,7,8-tetrahydrofolate + NAD(+) = (6R)-5,10-methylene-5,6,7,8-tetrahydrofolate + NADH + H(+). It participates in one-carbon metabolism; tetrahydrofolate interconversion. Plant MTHFRs strongly prefer NADH over NADPH. Not inhibited by methionine or S-adenosylmethionine. In terms of biological role, the probable reversibility of the MTHFR reaction in plants suggests that they can metabolize the methyl group of 5,10-methylenetetrahydrofolate to serine, sugars and starch. The chain is Methylenetetrahydrofolate reductase (NADH) 1 from Zea mays (Maize).